The chain runs to 502 residues: Lipoprotein LipO (502 aa).

Residues 1–21 (MKIRMRKKWMALPLAAMMIAG) form the signal peptide. Residue cysteine 22 is the site of N-palmitoyl cysteine attachment. Cysteine 22 carries the S-diacylglycerol cysteine lipid modification.

Its subcellular location is the cell membrane. The sequence is that of Lipoprotein LipO (lipO) from Bacillus subtilis (strain 168).